The primary structure comprises 358 residues: MTALAELTADLLAAVEAAPDLPALEEARVAALGKKGRITAMMGDMRSLTPEERKERGQQLNALKDRVAEAIEARRTVLKKEALAQRLEAERIDVTLPVRPEAEGRIHPISQTIDEIIAIFASMGFTVAEGPDIESDFHNFTALNIPPEHPARQMHDTFYLPPAGDGAARVLRTHTSPVQIRTMLQEKPPIRIIAPGRTYRSDYDQTHTPMFHQVEALVIGEDINMGHLKGCILEFARAFFQVDDLPVRFRPSFFPFTEPSAEVDIGCSRKGGELKIGNHGDWLEIMGSGMVHPKVLENCGLDPARWQGFAFGMGIERIAMLKYGIPDLRTFFEADLRWLKHYGFVPLDMPNLAQGLTR.

Position 258 (glutamate 258) interacts with Mg(2+).

The protein belongs to the class-II aminoacyl-tRNA synthetase family. Phe-tRNA synthetase alpha subunit type 1 subfamily. As to quaternary structure, tetramer of two alpha and two beta subunits. It depends on Mg(2+) as a cofactor.

Its subcellular location is the cytoplasm. The enzyme catalyses tRNA(Phe) + L-phenylalanine + ATP = L-phenylalanyl-tRNA(Phe) + AMP + diphosphate + H(+). The polypeptide is Phenylalanine--tRNA ligase alpha subunit (Rhodospirillum centenum (strain ATCC 51521 / SW)).